Here is a 303-residue protein sequence, read N- to C-terminus: Probable cell division protein WhiA (303 aa).

The H-T-H motif DNA-binding region spans 272 to 303 (SIQQIADSLETPLSKSGVNHRLRKINKIADEL).

This sequence belongs to the WhiA family.

Involved in cell division and chromosome segregation. The sequence is that of Probable cell division protein WhiA from Streptococcus agalactiae serotype Ia (strain ATCC 27591 / A909 / CDC SS700).